The primary structure comprises 119 residues: UPF0102 protein MS1289 (119 aa).

It belongs to the UPF0102 family.

In Mannheimia succiniciproducens (strain KCTC 0769BP / MBEL55E), this protein is UPF0102 protein MS1289.